Consider the following 643-residue polypeptide: 1-deoxy-D-xylulose-5-phosphate synthase (643 aa).

Thiamine diphosphate contacts are provided by residues H78 and 119 to 121 (AHS). A Mg(2+)-binding site is contributed by D150. Residues 151–152 (GS), N179, Y288, and E370 each bind thiamine diphosphate. N179 contributes to the Mg(2+) binding site.

The protein belongs to the transketolase family. DXPS subfamily. In terms of assembly, homodimer. Mg(2+) serves as cofactor. Thiamine diphosphate is required as a cofactor.

It carries out the reaction D-glyceraldehyde 3-phosphate + pyruvate + H(+) = 1-deoxy-D-xylulose 5-phosphate + CO2. The protein operates within metabolic intermediate biosynthesis; 1-deoxy-D-xylulose 5-phosphate biosynthesis; 1-deoxy-D-xylulose 5-phosphate from D-glyceraldehyde 3-phosphate and pyruvate: step 1/1. In terms of biological role, catalyzes the acyloin condensation reaction between C atoms 2 and 3 of pyruvate and glyceraldehyde 3-phosphate to yield 1-deoxy-D-xylulose-5-phosphate (DXP). In Brucella ovis (strain ATCC 25840 / 63/290 / NCTC 10512), this protein is 1-deoxy-D-xylulose-5-phosphate synthase.